We begin with the raw amino-acid sequence, 241 residues long: Ribulose-phosphate 3-epimerase 1 (241 aa).

Ser21 contributes to the substrate binding site. His46, Asp48, and His79 together coordinate a divalent metal cation. Asp48 serves as the catalytic Proton acceptor. Residues His79, 155-158 (GFGG), 192-194 (DGG), and 214-215 (GS) each bind substrate. Asp192 is a binding site for a divalent metal cation. Asp192 acts as the Proton donor in catalysis.

This sequence belongs to the ribulose-phosphate 3-epimerase family. It depends on a divalent metal cation as a cofactor.

The catalysed reaction is D-ribulose 5-phosphate = D-xylulose 5-phosphate. Its pathway is carbohydrate degradation. Its function is as follows. Catalyzes the reversible epimerization of D-ribulose 5-phosphate to D-xylulose 5-phosphate. This Cupriavidus necator (strain ATCC 17699 / DSM 428 / KCTC 22496 / NCIMB 10442 / H16 / Stanier 337) (Ralstonia eutropha) protein is Ribulose-phosphate 3-epimerase 1.